A 313-amino-acid polypeptide reads, in one-letter code: Olfactory receptor 1J4 (313 aa).

At methionine 1–alanine 25 the chain is on the extracellular side. N-linked (GlcNAc...) asparagine glycosylation is present at asparagine 5. Residues valine 26–isoleucine 49 form a helical membrane-spanning segment. Topologically, residues arginine 50 to threonine 57 are cytoplasmic. Residues proline 58–proline 79 form a helical membrane-spanning segment. The Extracellular segment spans residues lysine 80–glutamine 100. Residues cysteine 97 and cysteine 189 are joined by a disulfide bond. The helical transmembrane segment at methionine 101–tyrosine 120 threads the bilayer. The Cytoplasmic portion of the chain corresponds to aspartate 121 to glycine 139. Residues leucine 140–serine 158 traverse the membrane as a helical segment. Topologically, residues histidine 159 to asparagine 195 are extracellular. The chain crosses the membrane as a helical span at residues glutamate 196–glycine 219. Topologically, residues histidine 220–lysine 236 are cytoplasmic. A helical transmembrane segment spans residues alanine 237 to tyrosine 259. Residues phenylalanine 260–valine 272 are Extracellular-facing. Residues isoleucine 273–leucine 292 traverse the membrane as a helical segment. Topologically, residues arginine 293–glutamine 313 are cytoplasmic.

The protein belongs to the G-protein coupled receptor 1 family.

The protein resides in the cell membrane. Odorant receptor. The polypeptide is Olfactory receptor 1J4 (OR1J4) (Homo sapiens (Human)).